A 550-amino-acid polypeptide reads, in one-letter code: Arginine--tRNA ligase (550 aa).

The 'HIGH' region signature appears at 124 to 134; it reads ANPTGPLHVGH.

This sequence belongs to the class-I aminoacyl-tRNA synthetase family. In terms of assembly, monomer.

It is found in the cytoplasm. The catalysed reaction is tRNA(Arg) + L-arginine + ATP = L-arginyl-tRNA(Arg) + AMP + diphosphate. This Desulfovibrio desulfuricans (strain ATCC 27774 / DSM 6949 / MB) protein is Arginine--tRNA ligase.